A 201-amino-acid chain; its full sequence is dITP/XTP pyrophosphatase (201 aa).

8-13 provides a ligand contact to substrate; it reads SNNPGK. Glu-40 and Asp-69 together coordinate Mg(2+). Residue Asp-69 is the Proton acceptor of the active site. Residues Ser-70, 155–158, Lys-178, and 183–184 contribute to the substrate site; these read FGYD and HR.

Belongs to the HAM1 NTPase family. Homodimer. The cofactor is Mg(2+).

The enzyme catalyses XTP + H2O = XMP + diphosphate + H(+). It carries out the reaction dITP + H2O = dIMP + diphosphate + H(+). It catalyses the reaction ITP + H2O = IMP + diphosphate + H(+). Pyrophosphatase that catalyzes the hydrolysis of nucleoside triphosphates to their monophosphate derivatives, with a high preference for the non-canonical purine nucleotides XTP (xanthosine triphosphate), dITP (deoxyinosine triphosphate) and ITP. Seems to function as a house-cleaning enzyme that removes non-canonical purine nucleotides from the nucleotide pool, thus preventing their incorporation into DNA/RNA and avoiding chromosomal lesions. This Ralstonia nicotianae (strain ATCC BAA-1114 / GMI1000) (Ralstonia solanacearum) protein is dITP/XTP pyrophosphatase.